A 353-amino-acid polypeptide reads, in one-letter code: MTAILERRESTSVWARFCDWVTSTENRLYIGWFGVLMIPLLLTATSVFIIGFIAAPPVDIDGIREPVSGSLLFGNNIISGAIIPSSAAIGIHFYPIWEAASIDEWLYNGGCYELIVLHFLLGVACYMGREWELSFRLGMRPWIAVAYSAPVAAATAVFLIYPIGQGSFSDGMPLGISGTFNFMIVFQAEHNILMHPFHMLGVAGVFGGSLFSAMHGSLVTSSLIRETTENESANAGYKFGQEEETYNIVAAHGYFGRLIFQYASFNNSRSLHFFLAAWPVVCIWFTALGVSTMAFNLNGFNFNQSVVDSQGRVINTWADIINRANLGMEVMHERNAHNFPLDLASVDAPAVQG.

Threonine 2 carries the N-acetylthreonine modification. At threonine 2 the chain carries Phosphothreonine. Helical transmembrane passes span 29–46 (YIGW…TATS), 118–133 (HFLL…EWEL), and 142–156 (WIAV…AATA). Histidine 118 lines the chlorophyll a pocket. Pheophytin a is bound at residue tyrosine 126. Residues aspartate 170 and glutamate 189 each coordinate [CaMn4O5] cluster. Residues 197-218 (FHMLGVAGVFGGSLFSAMHGSL) traverse the membrane as a helical segment. Histidine 198 provides a ligand contact to chlorophyll a. A quinone-binding positions include histidine 215 and 264-265 (SF). Fe cation is bound at residue histidine 215. Histidine 272 is a Fe cation binding site. A helical transmembrane segment spans residues 274-288 (FLAAWPVVCIWFTAL). Histidine 332, glutamate 333, aspartate 342, and alanine 344 together coordinate [CaMn4O5] cluster. A propeptide spanning residues 345–353 (SVDAPAVQG) is cleaved from the precursor.

Belongs to the reaction center PufL/M/PsbA/D family. As to quaternary structure, PSII is composed of 1 copy each of membrane proteins PsbA, PsbB, PsbC, PsbD, PsbE, PsbF, PsbH, PsbI, PsbJ, PsbK, PsbL, PsbM, PsbT, PsbX, PsbY, PsbZ, Psb30/Ycf12, at least 3 peripheral proteins of the oxygen-evolving complex and a large number of cofactors. It forms dimeric complexes. The D1/D2 heterodimer binds P680, chlorophylls that are the primary electron donor of PSII, and subsequent electron acceptors. It shares a non-heme iron and each subunit binds pheophytin, quinone, additional chlorophylls, carotenoids and lipids. D1 provides most of the ligands for the Mn4-Ca-O5 cluster of the oxygen-evolving complex (OEC). There is also a Cl(-1) ion associated with D1 and D2, which is required for oxygen evolution. The PSII complex binds additional chlorophylls, carotenoids and specific lipids. is required as a cofactor. In terms of processing, tyr-161 forms a radical intermediate that is referred to as redox-active TyrZ, YZ or Y-Z. Post-translationally, C-terminally processed by CTPA; processing is essential to allow assembly of the oxygen-evolving complex and thus photosynthetic growth.

The protein localises to the plastid. Its subcellular location is the chloroplast thylakoid membrane. It catalyses the reaction 2 a plastoquinone + 4 hnu + 2 H2O = 2 a plastoquinol + O2. Its function is as follows. Photosystem II (PSII) is a light-driven water:plastoquinone oxidoreductase that uses light energy to abstract electrons from H(2)O, generating O(2) and a proton gradient subsequently used for ATP formation. It consists of a core antenna complex that captures photons, and an electron transfer chain that converts photonic excitation into a charge separation. The D1/D2 (PsbA/PsbD) reaction center heterodimer binds P680, the primary electron donor of PSII as well as several subsequent electron acceptors. In Nephroselmis olivacea (Green alga), this protein is Photosystem II protein D1.